A 138-amino-acid polypeptide reads, in one-letter code: Basic phospholipase A2 ammodytoxin B (138 aa).

The N-terminal stretch at 1–16 (MRTLWIVAVCLIGVEG) is a signal peptide. Disulfide bonds link Cys-42–Cys-131, Cys-44–Cys-60, Cys-59–Cys-111, Cys-65–Cys-138, Cys-66–Cys-104, Cys-73–Cys-97, and Cys-91–Cys-102. Ca(2+) is bound by residues Tyr-43, Gly-45, and Gly-47. Residue His-63 is part of the active site. Position 64 (Asp-64) interacts with Ca(2+). Residue Asp-105 is part of the active site.

This sequence belongs to the phospholipase A2 family. Group II subfamily. D49 sub-subfamily. Monomer. Binds to calmodulin, coagulation factor X (F10), M-type PLA2 receptor (R-180), 14-3-3 proteins gamma (YWHAG) and epsilon (YWHAE), and R25, a mitochondrial membrane protein. Ca(2+) serves as cofactor. In terms of tissue distribution, expressed by the venom gland.

The protein localises to the secreted. Its subcellular location is the host cytoplasm. It is found in the host cytosol. It carries out the reaction a 1,2-diacyl-sn-glycero-3-phosphocholine + H2O = a 1-acyl-sn-glycero-3-phosphocholine + a fatty acid + H(+). Its function is as follows. Snake venom phospholipase A2 (PLA2) that acts as a presynaptic neurotoxin, an inhibitor of blood coagulation, and has been found to bind with high affinity to intracellular proteins. The response of indirectly stimulated neuromuscular preparations to ammodytoxin (Atx) is triphasic. The first phase, the transient inhibition of the acetylcholine (ACh) release, starts soon after the addition of Atx and lasts for several minutes. This phase is probably independent of Atx enzymatic activity. The effect may be due to the specific binding of the toxin to presynaptic receptors. These receptors, called N-type receptors, are still unidentified. It is noteworthy that a neuronal isoform of the M-type PLA2 receptor (R180) has been identified as a high-affinity receptor for Atx in neuronal plasma membranes. It was demonstrated however that this receptor is not essential for expression of neurotoxicity by Atx. The second phase corresponds to an augmentation of neurotransmitter release. A peak is reached 10-20 minutes after exposure of the preparation to Atx and is followed by a gradual reduction. In this phase, the enzymatic activity of Atx of the mammalian is not significant. It is speculated that the increased release of neurotransmitter in this phase is induced by the interference of Atx with voltage-gated potassium channels. Measurements of ionic currents showed however that voltage-gated potassium channels are not affected by Atx. The third phase of the response of neuromuscular preparations to Atx, which corresponds to a complete and irreversible paralysis, is clearly dependent on the hydrolytic activity of the toxin. In addition to its presynaptic neurotoxicity, Atx shows an anticoagulant activity by binding with high affinity to activated coagulation factor X (F10) thus inhibiting the formation of the prothrombinase complex (FX/FV) and its activity (IC(50) is 82 nM). Surprisingly, Atx was discovered to bind intracellular proteins such as calmodulin (CaM), 14-3-3 proteins gamma (YWHAG) and epsilon (YWHAE) (by similarity with AtxC), as well as R25 (by similarity with AtxC), a mitochondrial integral membrane protein found in cerebral cortex. These findings raised a doubt about the dogma of the exclusively extracellular action of PLA2s, defended by the potential instability of these molecules in the reducing environment of the eukaryotic cytosol coupled with their possible inability to act as enzymes in this cellular compartment, due to too low concentration of calcium ions. This hypothesis was challenged efficiently by demonstrating the internalization of AtxA into a culture cells, but still remains to be directly demonstrated in vivo. PLA2 catalyzes the calcium-dependent hydrolysis of the 2-acyl groups in 3-sn-phosphoglycerides. This is Basic phospholipase A2 ammodytoxin B from Vipera ammodytes ammodytes (Western sand viper).